Here is a 222-residue protein sequence, read N- to C-terminus: Ras-related protein Rab11D (222 aa).

Residue Gly-22–Ser-29 participates in GTP binding. An Effector region motif is present at residues Ser-44–Phe-52. GTP contacts are provided by residues Asp-70 to Gln-74 and Asn-128 to Asp-131. Residues Cys-219 and Cys-220 are each lipidated (S-geranylgeranyl cysteine).

Belongs to the small GTPase superfamily. Rab family.

The protein localises to the cell membrane. The chain is Ras-related protein Rab11D (RAB11D) from Nicotiana tabacum (Common tobacco).